The chain runs to 366 residues: 4-hydroxy-3-methylbut-2-en-1-yl diphosphate synthase (flavodoxin) (366 aa).

Positions 270, 273, 305, and 312 each coordinate [4Fe-4S] cluster.

The protein belongs to the IspG family. The cofactor is [4Fe-4S] cluster.

The catalysed reaction is (2E)-4-hydroxy-3-methylbut-2-enyl diphosphate + oxidized [flavodoxin] + H2O + 2 H(+) = 2-C-methyl-D-erythritol 2,4-cyclic diphosphate + reduced [flavodoxin]. Its pathway is isoprenoid biosynthesis; isopentenyl diphosphate biosynthesis via DXP pathway; isopentenyl diphosphate from 1-deoxy-D-xylulose 5-phosphate: step 5/6. Its function is as follows. Converts 2C-methyl-D-erythritol 2,4-cyclodiphosphate (ME-2,4cPP) into 1-hydroxy-2-methyl-2-(E)-butenyl 4-diphosphate. This Acidithiobacillus ferrooxidans (strain ATCC 53993 / BNL-5-31) (Leptospirillum ferrooxidans (ATCC 53993)) protein is 4-hydroxy-3-methylbut-2-en-1-yl diphosphate synthase (flavodoxin).